The chain runs to 298 residues: ATP synthase gamma chain (298 aa).

The protein belongs to the ATPase gamma chain family. F-type ATPases have 2 components, CF(1) - the catalytic core - and CF(0) - the membrane proton channel. CF(1) has five subunits: alpha(3), beta(3), gamma(1), delta(1), epsilon(1). CF(0) has three main subunits: a, b and c.

The protein localises to the cell inner membrane. Functionally, produces ATP from ADP in the presence of a proton gradient across the membrane. The gamma chain is believed to be important in regulating ATPase activity and the flow of protons through the CF(0) complex. This is ATP synthase gamma chain from Francisella tularensis subsp. holarctica (strain LVS).